The following is a 69-amino-acid chain: Protein transport protein Sec61 subunit gamma (69 aa).

Over 1-40 the chain is Cytoplasmic; sequence MDILEETAAPLKDFAKNSIRLFKKCTKPDAQEFQKIALAT. The chain crosses the membrane as a helical span at residues 41–61; sequence LIGFAIMGFIGFFVKLIHIPI. The Extracellular segment spans residues 62-69; sequence NNILVGGV.

It belongs to the SecE/SEC61-gamma family. Heterotrimeric complex composed of SEC61-alpha, SEC61-beta and SEC61-gamma.

The protein localises to the endoplasmic reticulum membrane. Its function is as follows. Necessary for protein translocation in the endoplasmic reticulum. This chain is Protein transport protein Sec61 subunit gamma (sec61g), found in Dictyostelium discoideum (Social amoeba).